Consider the following 104-residue polypeptide: uncharacterized protein (104 aa).

This is an uncharacterized protein from Galliformes (FAdV-1).